The sequence spans 537 residues: Mitochondrial distribution and morphology protein 34 (537 aa).

Residues 1–195 (MAFNFNWSPL…LPAIIHRLSL (195 aa)) enclose the SMP-LTD domain. Disordered regions lie at residues 320–339 (YTFS…RPSL), 348–403 (GLSL…IMPH), 421–493 (GRSP…DTSS), and 516–537 (KNGN…YEAR). Residues 355-371 (RHSKAGRKKKTRVVNLR) show a composition bias toward basic residues. Over residues 378–391 (ANSEEEEDTPETDS) the composition is skewed to acidic residues. Residues 425-441 (DLQQQPRRPSFRAQATN) are compositionally biased toward polar residues.

The protein belongs to the MDM34 family. Component of the ER-mitochondria encounter structure (ERMES) or MDM complex, composed of MMM1, MDM10, MDM12 and MDM34.

It localises to the mitochondrion outer membrane. In terms of biological role, component of the ERMES/MDM complex, which serves as a molecular tether to connect the endoplasmic reticulum (ER) and mitochondria. Components of this complex are involved in the control of mitochondrial shape and protein biogenesis, and function in nonvesicular lipid trafficking between the ER and mitochondria. MDM34 is required for the interaction of the ER-resident membrane protein MMM1 and the outer mitochondrial membrane-resident beta-barrel protein MDM10. This chain is Mitochondrial distribution and morphology protein 34, found in Chaetomium globosum (strain ATCC 6205 / CBS 148.51 / DSM 1962 / NBRC 6347 / NRRL 1970) (Soil fungus).